The chain runs to 82 residues: Diptericin-A (82 aa).

Disordered stretches follow at residues 1 to 32 (DEKPKLILPTPAPPNLPQLVGGGGGNRKDGFG) and 45 to 69 (DNGGHSIGVSPGYSQHLPGPYGNSR). Phenylalanine amide is present on Phe82.

The protein belongs to the attacin/sarcotoxin-2 family.

It localises to the secreted. Its function is as follows. Antimicrobial peptide required to resist Gram-negative bacterial infections, regulated by Dredd. In Protophormia terraenovae (Northern blowfly), this protein is Diptericin-A.